The chain runs to 631 residues: Tail sheath protein (631 aa).

It belongs to the myoviridae tail sheath protein family. Homomultimer.

The protein resides in the virion. Its subcellular location is the host cytoplasm. Its function is as follows. Polymerizes as an extended structure around the baseplate-tail tube complex. During ejection, the sheath shifts to a contracted form, thereby making the inner tail tube protrude through the host cell envelope. This chain is Tail sheath protein, found in Salmonella typhi.